A 287-amino-acid chain; its full sequence is Vesicle-associated protein 4-3 (287 aa).

A compositionally biased stretch (basic and acidic residues) spans 1-14 (MALTEDKSDSDGRR). Residues 1–45 (MALTEDKSDSDGRRWGKFKLPFRNSNSQAPSASSSSSMATSSSSV) are disordered. Residues 25–45 (SNSQAPSASSSSSMATSSSSV) show a composition bias toward low complexity. The MSP domain maps to 99–221 (RLKLDPSAKL…EEQVMRVVFL (123 aa)).

It belongs to the VAMP-associated protein (VAP) (TC 9.B.17) family.

Its function is as follows. May play a role in vesicle trafficking. This is Vesicle-associated protein 4-3 (PVA43) from Arabidopsis thaliana (Mouse-ear cress).